The sequence spans 650 residues: ATP-dependent DNA helicase PIF1 (650 aa).

Residues 14–192 (MPSSTEAATD…ALEKRPMESQ (179 aa)) are PINT. 2 positions are modified to phosphoserine: Ser40 and Ser164. The segment at 171-199 (LQRAAATKAPDSALEKRPMESQTSTEAPR) is disordered. Residue 237–244 (GSAGTGKS) coordinates ATP. Residues 586–605 (QAYVALSRARSLQGLRVLDF) mediate DNA binding. Positions 631-650 (LESQDDEEANSDLENMDPNL) are disordered. Residues 633-650 (SQDDEEANSDLENMDPNL) show a composition bias toward acidic residues.

The protein belongs to the helicase family. PIF1 subfamily. In terms of assembly, monomer. Interacts with telomerase. It depends on Mg(2+) as a cofactor.

Its subcellular location is the nucleus. The protein resides in the mitochondrion. It catalyses the reaction Couples ATP hydrolysis with the unwinding of duplex DNA at the replication fork by translocating in the 5'-3' direction. This creates two antiparallel DNA single strands (ssDNA). The leading ssDNA polymer is the template for DNA polymerase III holoenzyme which synthesizes a continuous strand.. The enzyme catalyses ATP + H2O = ADP + phosphate + H(+). Functionally, DNA-dependent ATPase and 5'-3' DNA helicase required for the maintenance of both mitochondrial and nuclear genome stability. Efficiently unwinds G-quadruplex (G4) DNA structures and forked RNA-DNA hybrids. Resolves G4 structures, preventing replication pausing and double-strand breaks (DSBs) at G4 motifs. Involved in the maintenance of telomeric DNA. Inhibits telomere elongation, de novo telomere formation and telomere addition to DSBs via catalytic inhibition of telomerase. Reduces the processivity of telomerase by displacing active telomerase from DNA ends. Releases telomerase by unwinding the short telomerase RNA/telomeric DNA hybrid that is the intermediate in the telomerase reaction. Possesses an intrinsic strand annealing activity. This Mus musculus (Mouse) protein is ATP-dependent DNA helicase PIF1.